Consider the following 171-residue polypeptide: Large ribosomal subunit protein uL10 (171 aa).

It belongs to the universal ribosomal protein uL10 family. Part of the ribosomal stalk of the 50S ribosomal subunit. The N-terminus interacts with L11 and the large rRNA to form the base of the stalk. The C-terminus forms an elongated spine to which L12 dimers bind in a sequential fashion forming a multimeric L10(L12)X complex.

Its function is as follows. Forms part of the ribosomal stalk, playing a central role in the interaction of the ribosome with GTP-bound translation factors. This Corynebacterium jeikeium (strain K411) protein is Large ribosomal subunit protein uL10.